Consider the following 154-residue polypeptide: Protein X (154 aa).

Positions 68 to 117 (PCALRFTSARRMETTVNAHQVLPKVLHKRTLGLSAMSTTDLEAYFKDCLF) are mitochondrial targeting sequence.

This sequence belongs to the orthohepadnavirus protein X family. As to quaternary structure, may form homodimer. May interact with host CEBPA, CFLAR, CREB1, DDB1, E4F1, HBXIP, HSPD1/HSP60, NFKBIA, POLR2E and SMAD4. Interacts with host SMC5-SMC6 complex and induces its degradation. Interacts with host TRPC4AP; leading to prevent ubiquitination of TRPC4AP. Interacts with host PLSCR1; this interaction promotes ubiquitination and degradation of HBx and impairs HBx-mediated cell proliferation. In terms of processing, a fraction may be phosphorylated in insect cells and HepG2 cells, a human hepatoblastoma cell line. Phosphorylated in vitro by host protein kinase C or mitogen-activated protein kinase. N-acetylated in insect cells.

The protein localises to the host cytoplasm. The protein resides in the host nucleus. Its subcellular location is the host mitochondrion. In terms of biological role, multifunctional protein that plays a role in silencing host antiviral defenses and promoting viral transcription. Does not seem to be essential for HBV infection. May be directly involved in development of cirrhosis and liver cancer (hepatocellular carcinoma). Most of cytosolic activities involve modulation of cytosolic calcium. The effect on apoptosis is controversial depending on the cell types in which the studies have been conducted. May induce apoptosis by localizing in mitochondria and causing loss of mitochondrial membrane potential. May also modulate apoptosis by binding host CFLAR, a key regulator of the death-inducing signaling complex (DISC). Promotes viral transcription by using the host E3 ubiquitin ligase DDB1 to target the SMC5-SMC6 complex to proteasomal degradation. This host complex would otherwise bind to viral episomal DNA, and prevents its transcription. Moderately stimulates transcription of many different viral and cellular transcription elements. Promoters and enhancers stimulated by HBx contain DNA binding sites for NF-kappa-B, AP-1, AP-2, c-EBP, ATF/CREB, or the calcium-activated factor NF-AT. The chain is Protein X from Hepatitis B virus genotype C subtype adr (isolate Japan/Nishioka/1983) (HBV-C).